Reading from the N-terminus, the 780-residue chain is Molybdenum cofactor sulfurase (780 aa).

K246 is modified (N6-(pyridoxal phosphate)lysine). Residue C413 is part of the active site. Residues 635–780 (LRLLRQSGQR…MTCGDVVLVE (146 aa)) enclose the MOSC domain. The residue at position 734 (S734) is a Phosphoserine.

The protein belongs to the class-V pyridoxal-phosphate-dependent aminotransferase family. MOCOS subfamily. Pyridoxal 5'-phosphate is required as a cofactor.

The catalysed reaction is Mo-molybdopterin + L-cysteine + AH2 = thio-Mo-molybdopterin + L-alanine + A + H2O. Its function is as follows. Sulfurates the molybdenum cofactor. Sulfation of molybdenum is essential for xanthine dehydrogenase (XDH) and aldehyde oxidase (ADO) enzymes in which molybdenum cofactor is liganded by 1 oxygen and 1 sulfur atom in active form. This is Molybdenum cofactor sulfurase from Drosophila yakuba (Fruit fly).